The primary structure comprises 319 residues: Taste receptor type 2 member 30 (319 aa).

Met1 is a topological domain (extracellular). A helical transmembrane segment spans residues 2 to 22; the sequence is ITFLPIIFSILIVVIFVVGNF. At 23–46 the chain is on the cytoplasmic side; the sequence is ANGFIALVNSIEWVKRQKISFVDQ. A helical transmembrane segment spans residues 47–67; it reads ILTALAVSRVGLLWVLLLHWY. Residues 68–86 lie on the Extracellular side of the membrane; it reads ATQLNPAFYSVEVRITVYN. The helical transmembrane segment at 87–107 threads the bilayer; it reads VWAVTNHFSSWLATSLSMFYL. Residues 108–126 are Cytoplasmic-facing; sequence LKIANFSNLIFLRIKRRVK. A helical transmembrane segment spans residues 127–147; sequence SVVLVILLGPLLFLVCHLFVI. Residues 148–178 are Extracellular-facing; it reads NMDETIWTKEYEGNMTWKIKLKSAMYHSNMT. 2 N-linked (GlcNAc...) asparagine glycosylation sites follow: Asn161 and Asn176. The chain crosses the membrane as a helical span at residues 179–199; the sequence is LTILANFVPLTLTLISFLLLI. Residues 200–229 lie on the Cytoplasmic side of the membrane; sequence CSLCKHLKKMQLHGKGSQDPSTKVHIKALQ. Residues 230–250 traverse the membrane as a helical segment; sequence TVTSFLLLCAIYFLSMIISVC. Topologically, residues 251-259 are extracellular; it reads NLGRLQKQP. The chain crosses the membrane as a helical span at residues 260–280; it reads VFMFCQAIIFSYPSTHPFILI. The Cytoplasmic segment spans residues 281 to 319; sequence LGNKKLKQIFLSVLWHVRYWVKDRSLRLHRFTRAALCKG.

It belongs to the G-protein coupled receptor T2R family.

It localises to the membrane. Its function is as follows. Receptor that may play a role in the perception of bitterness and is gustducin-linked. May play a role in sensing the chemical composition of the gastrointestinal content. The activity of this receptor may stimulate alpha gustducin, mediate PLC-beta-2 activation and lead to the gating of TRPM5. The chain is Taste receptor type 2 member 30 (TAS2R30) from Pan paniscus (Pygmy chimpanzee).